We begin with the raw amino-acid sequence, 132 residues long: Small ribosomal subunit protein uS8 (132 aa).

This sequence belongs to the universal ribosomal protein uS8 family. Part of the 30S ribosomal subunit. Contacts proteins S5 and S12.

One of the primary rRNA binding proteins, it binds directly to 16S rRNA central domain where it helps coordinate assembly of the platform of the 30S subunit. This Aliarcobacter butzleri (strain RM4018) (Arcobacter butzleri) protein is Small ribosomal subunit protein uS8.